Consider the following 404-residue polypeptide: S-adenosylmethionine synthase (404 aa).

ATP is bound at residue His18. Residue Asp20 participates in Mg(2+) binding. Glu46 is a binding site for K(+). L-methionine is bound by residues Glu59 and Gln102. The segment at 102–112 is flexible loop; it reads QSPEIAQGVDH. ATP contacts are provided by residues 178-180, 249-250, Asp258, 264-265, Ala281, and Lys285; these read DGK, KF, and RK. Asp258 serves as a coordination point for L-methionine. Residue Lys289 coordinates L-methionine.

Belongs to the AdoMet synthase family. In terms of assembly, homotetramer; dimer of dimers. The cofactor is Mg(2+). It depends on K(+) as a cofactor.

The protein resides in the cytoplasm. The enzyme catalyses L-methionine + ATP + H2O = S-adenosyl-L-methionine + phosphate + diphosphate. It participates in amino-acid biosynthesis; S-adenosyl-L-methionine biosynthesis; S-adenosyl-L-methionine from L-methionine: step 1/1. In terms of biological role, catalyzes the formation of S-adenosylmethionine (AdoMet) from methionine and ATP. The overall synthetic reaction is composed of two sequential steps, AdoMet formation and the subsequent tripolyphosphate hydrolysis which occurs prior to release of AdoMet from the enzyme. The chain is S-adenosylmethionine synthase from Rhodococcus opacus (strain B4).